A 303-amino-acid chain; its full sequence is Mitochondrial substrate carrier family protein E (303 aa).

Topologically, residues 1–8 (MENKKESS) are mitochondrial intermembrane. Solcar repeat units lie at residues 6 to 93 (ESSL…SKQW), 104 to 197 (ESTI…CKST), and 210 to 298 (LPIP…LKYL). Residues 9 to 29 (LLYILTGATSGLLADSIMHPV) form a helical membrane-spanning segment. Residues 30–67 (DTVRARVQIEKVGKSQYKGTFNALNQIIKNEGVSYLYK) are Mitochondrial matrix-facing. Residues 68-88 (GFPIVATATVPAHALYFLGYE) traverse the membrane as a helical segment. At 89–109 (YSKQWVTDRYGKKWGESTITH) the chain is on the mitochondrial intermembrane side. Residues 110 to 130 (FSAGFVADALGSLIWVPMDII) form a helical membrane-spanning segment. Residues 131-171 (KQRLQVQTNTQKLNPNQTYYKGSFHAGKIILQEEGIRGLYR) are Mitochondrial matrix-facing. Residues 172 to 192 (GFMPALATYGPFVGIYFSVYE) form a helical membrane-spanning segment. The Mitochondrial intermembrane portion of the chain corresponds to 193-215 (KCKSTISSLLSKEKDQYLPIPYQ). Residues 216 to 236 (LGSGFFAGAFAAAVTCPLDVI) form a helical membrane-spanning segment. Residues 237 to 268 (KTRIQVQRSTEKQIYKGMWDSFKTILKEEGPK) are Mitochondrial matrix-facing. The chain crosses the membrane as a helical span at residues 269–289 (AFVKGMGARIWWIAPGNALTI). Residues 290–303 (ASYEQLKYLFKDLI) lie on the Mitochondrial intermembrane side of the membrane.

The protein belongs to the mitochondrial carrier (TC 2.A.29) family.

The protein localises to the mitochondrion inner membrane. Functionally, mitochondrial solute carriers shuttle metabolites, nucleotides, and cofactors through the mitochondrial inner membrane. This Dictyostelium discoideum (Social amoeba) protein is Mitochondrial substrate carrier family protein E (mcfE).